A 339-amino-acid chain; its full sequence is Heat-inducible transcription repressor HrcA (339 aa).

Belongs to the HrcA family.

Negative regulator of class I heat shock genes (grpE-dnaK-dnaJ and groELS operons). Prevents heat-shock induction of these operons. This is Heat-inducible transcription repressor HrcA from Leifsonia xyli subsp. xyli (strain CTCB07).